A 482-amino-acid chain; its full sequence is MVMEKPSPLLVGREFVRQYYTLLNKAPEYLHRFYGRNSSYVHGGVDASGKPQEAVYGQNDIHHKVLSLNFSECHTKIRHVDAHATLSDGVVVQVMGLLSNSGQPERKFMQTFVLAPEGSVPNKFYVHNDMFRYEDEVFGDSEPELDEESEDEVEEEQEERQPSPEPVQENANSGYYEAHPVTNGIEEPLEESSHEPEPEPESETKTEELKPQVEEKNLEELEEKSTTPPPAEPVSLPQEPPKAFSWASVTSKNLPPSGTVSSSGIPPHVKAPVSQPRVEAKPEVQSQPPRVREQRPRERPGFPPRGPRPGRGDMEQNDSDNRRIIRYPDSHQLFVGNLPHDIDENELKEFFMSFGNVVELRINTKGVGGKLPNFGFVVFDDSEPVQRILIAKPIMFRGEVRLNVEEKKTRAARERETRGGGDDRRDIRRNDRGPGGPRGIVGGGMMRDRDGRGPPPRGGMAQKLGSGRGTGQMEGRFTGQRR.

The NTF2 domain maps to 11-133 (VGREFVRQYY…FYVHNDMFRY (123 aa)). Residues 140–158 (DSEPELDEESEDEVEEEQE) are compositionally biased toward acidic residues. Disordered stretches follow at residues 140–171 (DSEPELDEESEDEVEEEQEERQPSPEPVQENA) and 187–318 (EPLE…EQND). Phosphoserine occurs at positions 141, 149, and 225. Residues 142 to 220 (EPELDEESED…PQVEEKNLEE (79 aa)) form an acidic disordered region region. Over residues 191–225 (ESSHEPEPEPESETKTEELKPQVEEKNLEELEEKS) the composition is skewed to basic and acidic residues. Thr227 is modified (phosphothreonine). Ser235 carries the post-translational modification Phosphoserine. The segment covering 247-264 (ASVTSKNLPPSGTVSSSG) has biased composition (polar residues). Lys281 participates in a covalent cross-link: Glycyl lysine isopeptide (Lys-Gly) (interchain with G-Cter in SUMO2). Residues 290–300 (RVREQRPRERP) are compositionally biased toward basic and acidic residues. The RRM domain maps to 331–409 (HQLFVGNLPH…VRLNVEEKKT (79 aa)). N6-succinyllysine is present on Lys392. The tract at residues 404-476 (VEEKKTRAAR…GRGTGQMEGR (73 aa)) is RG-rich region. Positions 408-432 (KTRAARERETRGGGDDRRDIRRNDR) are enriched in basic and acidic residues. Residues 408–482 (KTRAARERET…MEGRFTGQRR (75 aa)) are disordered. Positions 433–445 (GPGGPRGIVGGGM) are enriched in gly residues. Residue Arg457 is modified to Omega-N-methylarginine. Ser466 is modified (phosphoserine). Arg468 carries the omega-N-methylarginine modification.

Forms homooligomers. Forms heterodimers with G3BP1. Interacts with NFKBIA (via N-terminus). Interacts (via NTF2 domain) with USP10; inhibiting stress granule formation. Interacts (via NTF2 domain) with CAPRIN1; promoting stress granule formation. Associates (via RG-rich region) with 40S ribosome subunits. Interacts with PABPC1. In terms of assembly, (Microbial infection) Interacts with non-structural protein 3 (via C-terminus) of Sindbis virus and Semliki forest virus; this interaction inhibits the formation of host stress granules on viral mRNAs and the nsp3-G3BP2 complexes bind viral RNAs and probably orchestrate the assembly of viral replication complexes. In terms of processing, (Microbial infection) Cleaved by foot-and-mouth disease virus leader protease; this cleavage suppresses the formation of cytoplasmic stress granules.

Its subcellular location is the cytoplasm. The protein resides in the stress granule. Its activity is regulated as follows. Under physiological conditions, G3BP2 adopts a compact state that is stabilized by intramolecular interactions between the RG-rich and the acidic regions that inhibit phase separation. Upon stress, polysomes disassemble and mRNAs are released in an unfolded protein-free state. Binding of unfolded mRNA to G3BP2 outcompetes the intramolecular interactions and RNA-bound G3BP2 adopts an expanded conformation in which the RG-rich region becomes exposed to engage in protein-protein and protein-RNA interactions, allowing physical cross-linking of RNA molecules to form protein-RNA condensates, leading to liquid-liquid phase separation (LLPS). Its function is as follows. Scaffold protein that plays an essential role in cytoplasmic stress granule formation which acts as a platform for antiviral signaling. Plays an essential role in stress granule formation. Stress granules are membraneless compartments that store mRNAs and proteins, such as stalled translation pre-initiation complexes, in response to stress. Promotes formation of stress granules phase-separated membraneless compartment by undergoing liquid-liquid phase separation (LLPS) upon unfolded RNA-binding: functions as a molecular switch that triggers RNA-dependent LLPS in response to a rise in intracellular free RNA concentrations. This chain is Ras GTPase-activating protein-binding protein 2, found in Homo sapiens (Human).